We begin with the raw amino-acid sequence, 88 residues long: Gas vesicle protein A2 (88 aa).

It belongs to the gas vesicle GvpA family. The gas vesicle shell is 2 nm thick and consists of a single layer of this protein. It forms helical ribs nearly perpendicular to the long axis of the vesicle.

It localises to the gas vesicle shell. In terms of biological role, gas vesicles are hollow, gas filled proteinaceous nanostructures found in some microorganisms. During planktonic growth they allow positioning of the organism at a favorable depth for light or nutrient acquisition. GvpA forms the protein shell. It is not clear if the 2 type A proteins in this organism are functionally redundant. Functionally, when a minimal gvp locus (gvpA2-gvpR-gvpN-gvpF-gvpG-gvpL-gvpS-gvpK-gvpJ-gvpT-gvpU, called pNL29) is expressed in E.coli gas vesicles are made. The sequence is that of Gas vesicle protein A2 from Priestia megaterium (Bacillus megaterium).